Reading from the N-terminus, the 126-residue chain is Holo-[acyl-carrier-protein] synthase (126 aa).

D9 and E57 together coordinate Mg(2+).

It belongs to the P-Pant transferase superfamily. AcpS family. Mg(2+) serves as cofactor.

The protein resides in the cytoplasm. The catalysed reaction is apo-[ACP] + CoA = holo-[ACP] + adenosine 3',5'-bisphosphate + H(+). In terms of biological role, transfers the 4'-phosphopantetheine moiety from coenzyme A to a Ser of acyl-carrier-protein. The chain is Holo-[acyl-carrier-protein] synthase from Pseudoalteromonas atlantica (strain T6c / ATCC BAA-1087).